Reading from the N-terminus, the 505-residue chain is Tyrosine-protein kinase FRK (505 aa).

Residues Ser-37 and Ser-40 each carry the phosphoserine modification. The SH3 domain maps to 42 to 110 (RHGHYFVALF…PSNYVAEDRS (69 aa)). Positions 116–208 (WFFGAIGRSD…GLCVKLGKPC (93 aa)) constitute an SH2 domain. Thr-178 carries the post-translational modification Phosphothreonine. The Protein kinase domain occupies 234–491 (IQLLKRLGSG…TLRWKLEDYF (258 aa)). ATP contacts are provided by residues 240 to 248 (LGSGQFGEV) and Lys-262. Catalysis depends on Asp-354, which acts as the Proton acceptor. At Tyr-387 the chain carries Phosphotyrosine; by autocatalysis.

Belongs to the protein kinase superfamily. Tyr protein kinase family. SRC subfamily. As to quaternary structure, interacts (via the SH3-domain) with PTEN. Interacts with RB1. Predominantly expressed in epithelial derived cell lines and tissues, especially normal liver, kidney, breast and colon.

Its subcellular location is the cytoplasm. The protein localises to the nucleus. It catalyses the reaction L-tyrosyl-[protein] + ATP = O-phospho-L-tyrosyl-[protein] + ADP + H(+). Its function is as follows. Non-receptor tyrosine-protein kinase that negatively regulates cell proliferation. Positively regulates PTEN protein stability through phosphorylation of PTEN on 'Tyr-336', which in turn prevents its ubiquitination and degradation, possibly by reducing its binding to NEDD4. May function as a tumor suppressor. This is Tyrosine-protein kinase FRK (FRK) from Homo sapiens (Human).